A 462-amino-acid polypeptide reads, in one-letter code: N-myc proto-oncogene protein (462 aa).

Positions leucine 19–glutamate 47 are interaction with AURKA. Positions leucine 61–glycine 90 are interaction with AURKA and FBXW7. The 9aaTAD signature appears at asparagine 76 to glutamate 85. Disordered stretches follow at residues glutamate 133–proline 177, alanine 232–lysine 290, and alanine 332–glutamine 390. Positions glycine 138–alanine 174 are enriched in low complexity. Over residues threonine 257–aspartate 276 the composition is skewed to acidic residues. Residues serine 259 and serine 261 each carry the phosphoserine; by CK2 modification. A bHLH domain is found at glutamate 379–leucine 431. The tract at residues leucine 431–leucine 452 is leucine-zipper.

Efficient DNA binding requires dimerization with another bHLH protein. Binds DNA as a heterodimer with MAX. Interacts with KDM5A, KDM5B and HUWE1. Interacts with MYCNOS. Interacts with AURKA; interaction is phospho-independent and triggers AURKA activation; AURKA competes with FBXW7 for binding to unphosphorylated MYCN but not for binding to unphosphorylated MYCN. Interacts with FBXW7; FBXW7 competes with AURKA for binding to unphosphorylated MYCN but not for binding to phosphorylated MYCN. Post-translationally, phosphorylated by GSK3-beta which may promote its degradation. Phosphorylated by AURKA.

The protein resides in the nucleus. Positively regulates the transcription of MYCNOS in neuroblastoma cells. In Rattus norvegicus (Rat), this protein is N-myc proto-oncogene protein (Mycn).